Reading from the N-terminus, the 540-residue chain is Putative cysteine ligase BshC (540 aa).

Residues 457-477 (EKNRAFIQGQIAFLKERMERE) are a coiled coil.

Belongs to the BshC family.

In terms of biological role, involved in bacillithiol (BSH) biosynthesis. May catalyze the last step of the pathway, the addition of cysteine to glucosamine malate (GlcN-Mal) to generate BSH. This chain is Putative cysteine ligase BshC, found in Shouchella clausii (strain KSM-K16) (Alkalihalobacillus clausii).